A 535-amino-acid chain; its full sequence is T-complex protein 1 subunit beta (535 aa).

Ala2 is modified (N-acetylalanine). Ser3 carries the post-translational modification Phosphoserine. Lys13 is modified (N6-acetyllysine). ADP is bound at residue Gly44. Gly44 serves as a coordination point for ATP. Ser60 is modified (phosphoserine). Asp97 serves as a coordination point for Mg(2+). Residues Gly98, Thr99, Thr100, and Ser101 each contribute to the ADP site. Residues Gly98, Thr99, and Thr100 each contribute to the ATP site. Lys154 is subject to N6-acetyllysine. The ADP site is built by Ser168 and Ser169. The residue at position 181 (Lys181) is an N6-acetyllysine. Lys248 participates in a covalent cross-link: Glycyl lysine isopeptide (Lys-Gly) (interchain with G-Cter in SUMO2). The residue at position 260 (Ser260) is a Phosphoserine. Thr261 is subject to Phosphothreonine. The ADP site is built by Gly410, Glu495, and Lys500. ATP-binding residues include Glu495 and Lys500.

Belongs to the TCP-1 chaperonin family. As to quaternary structure, component of the chaperonin-containing T-complex (TRiC), a hexadecamer composed of two identical back-to-back stacked rings enclosing a protein folding chamber. Each ring is made up of eight different subunits: TCP1/CCT1, CCT2, CCT3, CCT4, CCT5, CCT6A/CCT6, CCT7, CCT8. Interacts with PACRG. Interacts with FLCN. Interacts with DLEC1. Interacts with SVEP1.

The protein resides in the cytoplasm. It carries out the reaction ATP + H2O = ADP + phosphate + H(+). Its function is as follows. Component of the chaperonin-containing T-complex (TRiC), a molecular chaperone complex that assists the folding of actin, tubulin and other proteins upon ATP hydrolysis. The TRiC complex mediates the folding of WRAP53/TCAB1, thereby regulating telomere maintenance. As part of the TRiC complex may play a role in the assembly of BBSome, a complex involved in ciliogenesis regulating transports vesicles to the cilia. The protein is T-complex protein 1 subunit beta (Cct2) of Rattus norvegicus (Rat).